The following is a 359-amino-acid chain: UDP-3-O-acylglucosamine N-acyltransferase (359 aa).

The active-site Proton acceptor is the histidine 253.

Belongs to the transferase hexapeptide repeat family. LpxD subfamily. In terms of assembly, homotrimer.

The catalysed reaction is a UDP-3-O-[(3R)-3-hydroxyacyl]-alpha-D-glucosamine + a (3R)-hydroxyacyl-[ACP] = a UDP-2-N,3-O-bis[(3R)-3-hydroxyacyl]-alpha-D-glucosamine + holo-[ACP] + H(+). The protein operates within bacterial outer membrane biogenesis; LPS lipid A biosynthesis. Catalyzes the N-acylation of UDP-3-O-acylglucosamine using 3-hydroxyacyl-ACP as the acyl donor. Is involved in the biosynthesis of lipid A, a phosphorylated glycolipid that anchors the lipopolysaccharide to the outer membrane of the cell. The chain is UDP-3-O-acylglucosamine N-acyltransferase from Burkholderia lata (strain ATCC 17760 / DSM 23089 / LMG 22485 / NCIMB 9086 / R18194 / 383).